The primary structure comprises 795 residues: RAS guanyl-releasing protein 1 (795 aa).

A compositionally biased stretch (basic and acidic residues) spans 1–12 (MGTLGKAREAPR). The interval 1–37 (MGTLGKAREAPRKPCHGSRAGPKARLEAKSTNSPLPA) is disordered. The N-terminal Ras-GEF domain maps to 53-176 (LGHLAKGASL…HLIDTTQINS (124 aa)). Positions 57-110 (AKGASLDDLIDSCIQSFDADGNLCRNNQLLQVMLTMHRIIISSAELLQKVMNLY) are ras exchanger motif region; required for transforming activity. A Phosphothreonine; by PKC modification is found at threonine 184. Residues 205-436 (EPEELSEHLT…YELSYAREPR (232 aa)) form the Ras-GEF domain. 2 EF-hand domains span residues 470–505 (HVQRMVDSVFKNYDLDQDGYISQEEFEKIAASFPFS) and 506–532 (FCVMDKDREGLISRDEITAYFMRASSI). Positions 483, 485, 487, 489, and 494 each coordinate Ca(2+). A Phorbol-ester/DAG-type zinc finger spans residues 541–591 (PHNFQETTYLKPTFCDNCAGFLWGVIKQGYRCKDCGMNCHKQCKDLVVFEC). Serine 597 carries the post-translational modification Phosphoserine. Residues 686–694 (TPGHFVLSS) form a suppress the PT region-mediated translocation to plasma membrane region. Residues 717–795 (LVRKRAFVKW…LAQMDHGDSA (79 aa)) are PT region; mediates the BCR-dependent translocation to plasma membrane. A coiled-coil region spans residues 738–779 (ELHLRLRTYQELEQEINTLKADNDALKIQLKYAQKKIESLQL).

Belongs to the RASGRP family. In terms of assembly, homodimer. Forms a signaling complex with DGKZ and HRAS. Interacts with F-actin. Interacts with SKAP1. Detected in spleen and thymus. Expressed by mature thymocytes and to a lower extent by bone marrow-derived mast cells (at protein level). Detected in B-cells and keratinocytes (at protein level).

It is found in the cytoplasm. The protein localises to the cytosol. Its subcellular location is the cell membrane. It localises to the golgi apparatus membrane. The protein resides in the endoplasmic reticulum membrane. Autoinhibited. Activated by diacylglycerol and calcium binding, which induces a conformational change releasing the autoinhibitory state. Regulated by DGKA. Regulated by DGKZ. Regulated by PLC gamma and F-actin polymerization. Functions as a calcium- and diacylglycerol (DAG)-regulated nucleotide exchange factor specifically activating Ras through the exchange of bound GDP for GTP. Activates the Erk/MAP kinase cascade. Regulates T-cell/B-cell development, homeostasis and differentiation by coupling T-lymphocyte/B-lymphocyte antigen receptors to Ras. Regulates NK cell cytotoxicity and ITAM-dependent cytokine production by activation of Ras-mediated ERK and JNK pathways. Functions in mast cell degranulation and cytokine secretion, regulating FcERI-evoked allergic responses. May also function in differentiation of other cell types. Proto-oncogene, which promotes T-cell lymphomagenesis when its expression is deregulated. In Mus musculus (Mouse), this protein is RAS guanyl-releasing protein 1 (Rasgrp1).